We begin with the raw amino-acid sequence, 490 residues long: Cytochrome P450 2C54 (490 aa).

The residue at position 127 (Ser127) is a Phosphoserine. Residues Lys252 and Lys375 each carry the N6-acetyllysine modification. Cys435 provides a ligand contact to heme.

Belongs to the cytochrome P450 family. Heme is required as a cofactor. Expressed in liver.

The protein localises to the endoplasmic reticulum membrane. It localises to the microsome membrane. It carries out the reaction an organic molecule + reduced [NADPH--hemoprotein reductase] + O2 = an alcohol + oxidized [NADPH--hemoprotein reductase] + H2O + H(+). Its function is as follows. Metabolizes arachidonic acid mainly to 12-hydroxyeicosatetraenoic acid (HETE). This chain is Cytochrome P450 2C54, found in Mus musculus (Mouse).